The chain runs to 282 residues: NADPH-dependent 7-cyano-7-deazaguanine reductase (282 aa).

88–90 serves as a coordination point for substrate; the sequence is IES. Position 90–91 (90–91) interacts with NADPH; sequence SK. The Thioimide intermediate role is filled by Cys190. Catalysis depends on Asp197, which acts as the Proton donor. Position 229–230 (229–230) interacts with substrate; sequence HE. 258-259 serves as a coordination point for NADPH; the sequence is RG.

The protein belongs to the GTP cyclohydrolase I family. QueF type 2 subfamily. In terms of assembly, homodimer.

The protein resides in the cytoplasm. The enzyme catalyses 7-aminomethyl-7-carbaguanine + 2 NADP(+) = 7-cyano-7-deazaguanine + 2 NADPH + 3 H(+). It participates in tRNA modification; tRNA-queuosine biosynthesis. Functionally, catalyzes the NADPH-dependent reduction of 7-cyano-7-deazaguanine (preQ0) to 7-aminomethyl-7-deazaguanine (preQ1). This Pectobacterium carotovorum subsp. carotovorum (strain PC1) protein is NADPH-dependent 7-cyano-7-deazaguanine reductase.